Reading from the N-terminus, the 347-residue chain is Microneme protein 21 (347 aa).

It is found in the cytoplasmic vesicle. It localises to the secretory vesicle. Its subcellular location is the microneme. The protein localises to the secreted. The sequence is that of Microneme protein 21 from Toxoplasma gondii.